Reading from the N-terminus, the 354-residue chain is Histidinol-phosphate aminotransferase (354 aa).

The residue at position 222 (K222) is an N6-(pyridoxal phosphate)lysine.

The protein belongs to the class-II pyridoxal-phosphate-dependent aminotransferase family. Histidinol-phosphate aminotransferase subfamily. In terms of assembly, homodimer. Requires pyridoxal 5'-phosphate as cofactor.

The enzyme catalyses L-histidinol phosphate + 2-oxoglutarate = 3-(imidazol-4-yl)-2-oxopropyl phosphate + L-glutamate. Its pathway is amino-acid biosynthesis; L-histidine biosynthesis; L-histidine from 5-phospho-alpha-D-ribose 1-diphosphate: step 7/9. This chain is Histidinol-phosphate aminotransferase, found in Staphylococcus carnosus (strain TM300).